We begin with the raw amino-acid sequence, 446 residues long: Phosphoglucosamine mutase (446 aa).

Catalysis depends on S100, which acts as the Phosphoserine intermediate. Mg(2+)-binding residues include S100, D241, D243, and D245. Position 100 is a phosphoserine (S100).

Belongs to the phosphohexose mutase family. Mg(2+) is required as a cofactor. In terms of processing, activated by phosphorylation.

The catalysed reaction is alpha-D-glucosamine 1-phosphate = D-glucosamine 6-phosphate. Functionally, catalyzes the conversion of glucosamine-6-phosphate to glucosamine-1-phosphate. The chain is Phosphoglucosamine mutase from Methylobacterium sp. (strain 4-46).